The following is a 286-amino-acid chain: Bifunctional protein FolD (286 aa).

Residues 165-167 (GRS) and Ser190 contribute to the NADP(+) site.

It belongs to the tetrahydrofolate dehydrogenase/cyclohydrolase family. As to quaternary structure, homodimer.

It catalyses the reaction (6R)-5,10-methylene-5,6,7,8-tetrahydrofolate + NADP(+) = (6R)-5,10-methenyltetrahydrofolate + NADPH. The catalysed reaction is (6R)-5,10-methenyltetrahydrofolate + H2O = (6R)-10-formyltetrahydrofolate + H(+). Its pathway is one-carbon metabolism; tetrahydrofolate interconversion. Its function is as follows. Catalyzes the oxidation of 5,10-methylenetetrahydrofolate to 5,10-methenyltetrahydrofolate and then the hydrolysis of 5,10-methenyltetrahydrofolate to 10-formyltetrahydrofolate. The protein is Bifunctional protein FolD of Burkholderia cenocepacia (strain ATCC BAA-245 / DSM 16553 / LMG 16656 / NCTC 13227 / J2315 / CF5610) (Burkholderia cepacia (strain J2315)).